A 416-amino-acid polypeptide reads, in one-letter code: Tryptophan synthase beta chain (416 aa).

N6-(pyridoxal phosphate)lysine is present on Lys109.

It belongs to the TrpB family. Tetramer of two alpha and two beta chains. Requires pyridoxal 5'-phosphate as cofactor.

It catalyses the reaction (1S,2R)-1-C-(indol-3-yl)glycerol 3-phosphate + L-serine = D-glyceraldehyde 3-phosphate + L-tryptophan + H2O. Its pathway is amino-acid biosynthesis; L-tryptophan biosynthesis; L-tryptophan from chorismate: step 5/5. Functionally, the beta subunit is responsible for the synthesis of L-tryptophan from indole and L-serine. The sequence is that of Tryptophan synthase beta chain from Synechococcus sp. (strain WH7803).